We begin with the raw amino-acid sequence, 496 residues long: MPQLHDSGSRAIQPSDQTHQHDFARIFGIETEYGVSVTDIPEPMDASHVAMTMFQPVVRRARSTNTYVENGSRLYLDVGSHPEYATAEAICPSDALLSDLAGEQTMRSMGLDAQRRLRESDAQNRHATLHLYKNNADSAGHSFGCHENYLVRRFVNLDMIQHVLLPFLITRQIYTGAGRFDGERLLFTQRAAFVDETVSSATTRSRPMINTRDEPHANPDDYRRLHVIIGDSNRSQWATLMKCATTHLVLCMMEHAARSGCETELEAFALADPIAANHAINTDGAHARIALAAGRSTTALELQQMMLEQVESFAAHHGDALEASLRYDALCNVEWIVGQWRWVLDRLAANDIETLSHVVDWASKQVFFNRLQSRGTVTPARLRQLDLDYHDIANGRLYPSLCAHGLMRTLVDADQIHDAVSTPPPHTRAVLRGRFVAAASHTDAVYDCDWTTLKLVRPVHMEAVLLDPFHDEPTKQYDKLMGELGDARADGDEAPV.

Residue glutamate 30 coordinates Mg(2+). Residue arginine 73 participates in ATP binding. Residue tyrosine 75 coordinates Mg(2+). Residue aspartate 77 is the Proton acceptor of the active site. Residue glutamate 83 coordinates Mg(2+). Residues threonine 86 and tryptophan 450 each contribute to the ATP site.

The protein belongs to the Pup ligase/Pup deamidase family. Pup-conjugating enzyme subfamily.

It catalyses the reaction ATP + [prokaryotic ubiquitin-like protein]-L-glutamate + [protein]-L-lysine = ADP + phosphate + N(6)-([prokaryotic ubiquitin-like protein]-gamma-L-glutamyl)-[protein]-L-lysine.. The protein operates within protein degradation; proteasomal Pup-dependent pathway. It functions in the pathway protein modification; protein pupylation. In terms of biological role, catalyzes the covalent attachment of the prokaryotic ubiquitin-like protein modifier Pup to the proteasomal substrate proteins, thereby targeting them for proteasomal degradation. This tagging system is termed pupylation. The ligation reaction involves the side-chain carboxylate of the C-terminal glutamate of Pup and the side-chain amino group of a substrate lysine. The sequence is that of Pup--protein ligase from Bifidobacterium animalis subsp. lactis (strain AD011).